We begin with the raw amino-acid sequence, 311 residues long: Porphobilinogen deaminase (311 aa).

The residue at position 243 (C243) is an S-(dipyrrolylmethanemethyl)cysteine.

The protein belongs to the HMBS family. In terms of assembly, monomer. Requires dipyrromethane as cofactor.

It catalyses the reaction 4 porphobilinogen + H2O = hydroxymethylbilane + 4 NH4(+). Its pathway is porphyrin-containing compound metabolism; protoporphyrin-IX biosynthesis; coproporphyrinogen-III from 5-aminolevulinate: step 2/4. In terms of biological role, tetrapolymerization of the monopyrrole PBG into the hydroxymethylbilane pre-uroporphyrinogen in several discrete steps. The sequence is that of Porphobilinogen deaminase from Aliivibrio salmonicida (strain LFI1238) (Vibrio salmonicida (strain LFI1238)).